Consider the following 377-residue polypeptide: Queuine tRNA-ribosyltransferase (377 aa).

Aspartate 94 (proton acceptor) is an active-site residue. Residues 94–98 (DSGGF), aspartate 148, glutamine 191, and glycine 218 contribute to the substrate site. The tract at residues 249 to 255 (GVGTPDD) is RNA binding. Aspartate 268 acts as the Nucleophile in catalysis. The RNA binding; important for wobble base 34 recognition stretch occupies residues 273-277 (TRAGR).

This sequence belongs to the queuine tRNA-ribosyltransferase family. Homodimer. Within each dimer, one monomer is responsible for RNA recognition and catalysis, while the other monomer binds to the replacement base PreQ1.

The catalysed reaction is 7-aminomethyl-7-carbaguanine + guanosine(34) in tRNA = 7-aminomethyl-7-carbaguanosine(34) in tRNA + guanine. It functions in the pathway tRNA modification; tRNA-queuosine biosynthesis. Catalyzes the base-exchange of a guanine (G) residue with the queuine precursor 7-aminomethyl-7-deazaguanine (PreQ1) at position 34 (anticodon wobble position) in tRNAs with GU(N) anticodons (tRNA-Asp, -Asn, -His and -Tyr). Catalysis occurs through a double-displacement mechanism. The nucleophile active site attacks the C1' of nucleotide 34 to detach the guanine base from the RNA, forming a covalent enzyme-RNA intermediate. The proton acceptor active site deprotonates the incoming PreQ1, allowing a nucleophilic attack on the C1' of the ribose to form the product. After dissociation, two additional enzymatic reactions on the tRNA convert PreQ1 to queuine (Q), resulting in the hypermodified nucleoside queuosine (7-(((4,5-cis-dihydroxy-2-cyclopenten-1-yl)amino)methyl)-7-deazaguanosine). The polypeptide is Queuine tRNA-ribosyltransferase (Brucella suis biovar 1 (strain 1330)).